Reading from the N-terminus, the 730-residue chain is PWWP domain-containing protein 2A (730 aa).

Residues methionine 1 to proline 15 show a composition bias toward low complexity. A disordered region spans residues methionine 1 to serine 134. The span at proline 66 to glycine 77 shows a compositional bias: pro residues. 2 positions are modified to phosphoserine: serine 82 and serine 99. Residues proline 91–proline 108 are compositionally biased toward pro residues. Residues glycine 128–glycine 346 form an interaction with HDAC1 and MTA1 region. Residue lysine 188 forms a Glycyl lysine isopeptide (Lys-Gly) (interchain with G-Cter in SUMO2) linkage. 3 disordered regions span residues tyrosine 257–methionine 276, isoleucine 311–arginine 355, and lysine 409–lysine 531. The span at arginine 267–methionine 276 shows a compositional bias: basic residues. Composition is skewed to basic and acidic residues over residues isoleucine 311–aspartate 329 and aspartate 341–arginine 354. The segment at methionine 396–threonine 547 is interaction with the H2A.Z/H2AZ1. Positions serine 488–glutamate 501 are enriched in low complexity. Basic and acidic residues predominate over residues aspartate 512–methionine 527. The 61-residue stretch at valine 630–asparagine 690 folds into the PWWP domain.

As to quaternary structure, component of a MTA1-specific subcomplex of the NuRD complex (M1HR), which is composed of PWWP2A, MTA1/2, HDAC1/2, and RBBP4/7 but does not contain CHD4 and MBD3. Interacts with MTA1; the interaction mediates the association of PWWP2A with the M1HR complex. Interacts with H2A.Z/H2AZ1. Interacts (via PWWP domain) with histone H3 trimethylated at 'Lys-36' (H3K36me3). Does not interact with CHD4 and MBD3.

Its subcellular location is the nucleus. Functionally, chromatin-binding protein that acts as an adapter between distinct nucleosome components (H3K36me3 or H2A.Z) and chromatin-modifying complexes, contributing to the regulation of the levels of histone acetylation at actively transcribed genes. Competes with CHD4 and MBD3 for interaction with MTA1 to form a NuRD subcomplex, preventing the formation of full NuRD complex (containing CHD4 and MBD3), leading to recruitment of HDACs to gene promoters resulting in turn in the deacetylation of nearby H3K27 and H2A.Z. Plays a role in facilitating transcriptional elongation and repression of spurious transcription initiation through regulation of histone acetylation. Essential for proper mitosis progression. The sequence is that of PWWP domain-containing protein 2A (Pwwp2a) from Mus musculus (Mouse).